We begin with the raw amino-acid sequence, 60 residues long: Myrmicitoxin(1)-Pr4c (60 aa).

A signal peptide spans 1-23 (MKAIIFLFAVLTVVAIIIPIISG). A propeptide spanning residues 24–33 (EPNAGPHAAS) is cleaved from the precursor. Gln59 is modified (glutamine amide).

The protein belongs to the formicidae venom clade 2 family. In terms of tissue distribution, expressed by the venom gland.

The protein resides in the secreted. Toxin that causes a rapid and irreversible paralysis when intrathoracically injected into insects (blowflies). Does not cause spontaneous nocifensive behaviors by intraplantar injection in mice. This is Myrmicitoxin(1)-Pr4c from Pogonomyrmex rugosus (Desert harvester ant).